The primary structure comprises 258 residues: 5'-nucleotidase SurE (258 aa).

Positions 9, 10, 42, and 96 each coordinate a divalent metal cation.

The protein belongs to the SurE nucleotidase family. A divalent metal cation is required as a cofactor.

The protein resides in the cytoplasm. The enzyme catalyses a ribonucleoside 5'-phosphate + H2O = a ribonucleoside + phosphate. Its function is as follows. Nucleotidase that shows phosphatase activity on nucleoside 5'-monophosphates. The chain is 5'-nucleotidase SurE from Campylobacter jejuni subsp. doylei (strain ATCC BAA-1458 / RM4099 / 269.97).